A 234-amino-acid chain; its full sequence is tRNA (guanine-N(1)-)-methyltransferase (234 aa).

S-adenosyl-L-methionine is bound by residues Gly112 and 132 to 137 (IGDFIL).

It belongs to the RNA methyltransferase TrmD family. Homodimer.

It is found in the cytoplasm. It carries out the reaction guanosine(37) in tRNA + S-adenosyl-L-methionine = N(1)-methylguanosine(37) in tRNA + S-adenosyl-L-homocysteine + H(+). In terms of biological role, specifically methylates guanosine-37 in various tRNAs. This Campylobacter jejuni subsp. doylei (strain ATCC BAA-1458 / RM4099 / 269.97) protein is tRNA (guanine-N(1)-)-methyltransferase.